An 832-amino-acid polypeptide reads, in one-letter code: pre-rRNA 2'-O-ribose RNA methyltransferase FTSJ3 (832 aa).

S-adenosyl-L-methionine contacts are provided by Gly-56, Trp-58, Asp-76, Asp-92, and Asp-117. Lys-157 acts as the Proton acceptor in catalysis. Disordered stretches follow at residues 332-358 (INLS…ADEM), 485-523 (RLER…LEEK), and 546-631 (DADE…GLVE). Composition is skewed to basic and acidic residues over residues 345–358 (EEEK…ADEM) and 485–495 (RLERERREQGV). Acidic residues predominate over residues 503–514 (EEEEEEEEEEEN). The segment covering 570 to 579 (KTKKKGQKKK) has biased composition (basic residues). Over residues 600–618 (AEAEAEQSSDDDSSSDEEG) the composition is skewed to acidic residues. The stretch at 726–758 (IKKVAEAKARKKRRMLKKMEQMKKKAEAVVSTV) forms a coiled coil. A disordered region spans residues 795-832 (GPRVRRPPGVKGQFKVVDSRLKKDVRAQKRKEQKKRRK). A compositionally biased stretch (basic and acidic residues) spans 811 to 821 (VDSRLKKDVRA). Positions 822–832 (QKRKEQKKRRK) are enriched in basic residues.

This sequence belongs to the class I-like SAM-binding methyltransferase superfamily. RNA methyltransferase RlmE family. SPB1 subfamily. Interacts with NIP7.

It is found in the nucleus. The protein localises to the nucleolus. The catalysed reaction is a ribonucleotide in rRNA + S-adenosyl-L-methionine = a 2'-O-methylribonucleotide in rRNA + S-adenosyl-L-homocysteine + H(+). Its function is as follows. RNA 2'-O-methyltransferase involved in the processing of the 34S pre-rRNA to 18S rRNA and in 40S ribosomal subunit formation. This chain is pre-rRNA 2'-O-ribose RNA methyltransferase FTSJ3, found in Gallus gallus (Chicken).